The chain runs to 705 residues: Polyribonucleotide nucleotidyltransferase (705 aa).

Positions 487 and 493 each coordinate Mg(2+). The region spanning 554–613 (PKILTMKINPDKIRDVIGPSGKQINKIIEDTGVKIDIEQDGTIFISSTEEDMNQKAKKII) is the KH domain. One can recognise an S1 motif domain in the interval 623 to 691 (GQLYLGKVKR…KQGRVNLSRK (69 aa)).

This sequence belongs to the polyribonucleotide nucleotidyltransferase family. Requires Mg(2+) as cofactor.

It localises to the cytoplasm. It carries out the reaction RNA(n+1) + phosphate = RNA(n) + a ribonucleoside 5'-diphosphate. Functionally, involved in mRNA degradation. Catalyzes the phosphorolysis of single-stranded polyribonucleotides processively in the 3'- to 5'-direction. The protein is Polyribonucleotide nucleotidyltransferase of Bacillus pumilus (strain SAFR-032).